The primary structure comprises 418 residues: Nuclear hormone receptor 114 (418 aa).

Residues 12–87 (DHVCLVCQDF…VGMDRNALQQ (76 aa)) constitute a DNA-binding region (nuclear receptor). 2 consecutive NR C4-type zinc fingers follow at residues 15-35 (CLVC…CVGC) and 51-70 (CQFE…CRYC). A disordered region spans residues 89 to 130 (RDPIGYTKRTRRPKKELKTTSDCSSDEGASTPPSVSPLQLSP). One can recognise an NR LBD domain in the interval 170 to 409 (PIRSLHEALC…AFARQLFFGD (240 aa)). The interval 398-409 (FSAFARQLFFGD) is AF-2.

This sequence belongs to the nuclear hormone receptor family. As to expression, expressed in germ and intestinal cells and at low levels in the hypodermis.

The protein localises to the nucleus. In terms of biological role, probable transcription factor which may have a role in detoxifying dietary metabolites arising from bacterial tryptophan metabolism. Required for fertility and involved in proper postembryonic germline development, especially germline stem cell (GSC) proliferation. Required for activation of the methionine/S-adenosylmethionine (Met/SAM) cycle in response to low levels of SAM. The protein is Nuclear hormone receptor 114 of Caenorhabditis elegans.